Consider the following 253-residue polypeptide: 5-oxoprolinase subunit A (253 aa).

Belongs to the LamB/PxpA family. In terms of assembly, forms a complex composed of PxpA, PxpB and PxpC.

The enzyme catalyses 5-oxo-L-proline + ATP + 2 H2O = L-glutamate + ADP + phosphate + H(+). Functionally, catalyzes the cleavage of 5-oxoproline to form L-glutamate coupled to the hydrolysis of ATP to ADP and inorganic phosphate. The protein is 5-oxoprolinase subunit A of Bacillus anthracis (strain A0248).